The following is a 107-amino-acid chain: Large ribosomal subunit protein uL24 (107 aa).

Belongs to the universal ribosomal protein uL24 family. In terms of assembly, part of the 50S ribosomal subunit.

Functionally, one of two assembly initiator proteins, it binds directly to the 5'-end of the 23S rRNA, where it nucleates assembly of the 50S subunit. One of the proteins that surrounds the polypeptide exit tunnel on the outside of the subunit. The sequence is that of Large ribosomal subunit protein uL24 from Natranaerobius thermophilus (strain ATCC BAA-1301 / DSM 18059 / JW/NM-WN-LF).